The following is a 621-amino-acid chain: MDFDAIVIGGGHAGIEAALAISRLNFKTLMITQNLDTIGKLSCNPAIGGLAKGNMVREIDALGGEMGRIIDFSMIQFRVLNKSRGPAVQAPRAQADKLMYQTKAKETLERQDNLDLFQDTVVDFLLNSMRNEIEGVVTERGNKFRSSVVVLTTGTFLRGKIFIGEYRANMGRLAEFSAYGLDKTLLGLGFEMGRLKTGTPARIHRKSVDFSKTEVQFGDSDIIPFSFSNGKLDKSQLSCYVTYTNKRTHEIISENMHLSPLYSGEIVGNGPRYCPSIEDKIVKFKDKDRHQIFIEPEGFNTEEMYLNGLSSSLPENVQQKLINSIEGLEHAVITRPGYAVEYDYINPIELYPSLESKRVKGLFIAGQTNGSSGYEEAAAQGLMAGINAALRLQNKKPMILTRTSSYIGVLIDDLVTKGTKEPYRMFTSRAEHRLNLRHDTSDKRLIKIGYDLGLVDEERYSKYLFKKRRVEEIKELLKQRRLSLKDIADEQLKKHVNKDFYHILKDPSISLDNLIKIDPSLSDSKVILEQVELDIKYEGYINRQKDLIKKLHNLELVKLPFDFNYGIIEGLSREAREKFSKVQPATLAQASRIPGIRNTDITVLFIYFSNPKNKVVLNFSV.

An FAD-binding site is contributed by 9–14 (GGGHAG). An NAD(+)-binding site is contributed by 270-284 (GPRYCPSIEDKIVKF).

This sequence belongs to the MnmG family. Homodimer. Heterotetramer of two MnmE and two MnmG subunits. It depends on FAD as a cofactor.

It is found in the cytoplasm. NAD-binding protein involved in the addition of a carboxymethylaminomethyl (cmnm) group at the wobble position (U34) of certain tRNAs, forming tRNA-cmnm(5)s(2)U34. This is tRNA uridine 5-carboxymethylaminomethyl modification enzyme MnmG from Borreliella afzelii (strain PKo) (Borrelia afzelii).